We begin with the raw amino-acid sequence, 403 residues long: Argininosuccinate synthase (403 aa).

ATP is bound by residues 13 to 21 (AYSGGLDTS) and alanine 40. Residues tyrosine 91 and serine 96 each contribute to the L-citrulline site. Glycine 121 provides a ligand contact to ATP. Positions 123, 127, and 128 each coordinate L-aspartate. Asparagine 127 is a binding site for L-citrulline. L-citrulline contacts are provided by arginine 131, serine 180, serine 189, glutamate 265, and tyrosine 277.

This sequence belongs to the argininosuccinate synthase family. Type 1 subfamily. As to quaternary structure, homotetramer.

The protein localises to the cytoplasm. It carries out the reaction L-citrulline + L-aspartate + ATP = 2-(N(omega)-L-arginino)succinate + AMP + diphosphate + H(+). It participates in amino-acid biosynthesis; L-arginine biosynthesis; L-arginine from L-ornithine and carbamoyl phosphate: step 2/3. The protein is Argininosuccinate synthase of Leptospira interrogans serogroup Icterohaemorrhagiae serovar Lai (strain 56601).